We begin with the raw amino-acid sequence, 344 residues long: Phenylalanine--tRNA ligase alpha subunit (344 aa).

A Mg(2+)-binding site is contributed by Glu256.

Belongs to the class-II aminoacyl-tRNA synthetase family. Phe-tRNA synthetase alpha subunit type 1 subfamily. Tetramer of two alpha and two beta subunits. The cofactor is Mg(2+).

It is found in the cytoplasm. The catalysed reaction is tRNA(Phe) + L-phenylalanine + ATP = L-phenylalanyl-tRNA(Phe) + AMP + diphosphate + H(+). This is Phenylalanine--tRNA ligase alpha subunit from Bacillus cytotoxicus (strain DSM 22905 / CIP 110041 / 391-98 / NVH 391-98).